The sequence spans 513 residues: Probable G-protein coupled receptor 176 (513 aa).

Residues 1-25 (MGHNGSWVSPNTSHPRNTSGAQAGA) form a disordered region. Over 1-41 (MGHNGSWVSPNTSHPRNTSGAQAGANSSAFGELSEAQLYRQ) the chain is Extracellular. Residues N4, N11, N17, and N26 are each glycosylated (N-linked (GlcNAc...) asparagine). A helical membrane pass occupies residues 42-64 (FTTTVQVVIFIGSLLGNFTVLWS). Over 65-77 (TCRTTVFKSVTNR) the chain is Cytoplasmic. The helical transmembrane segment at 78–98 (FIKNLACSGICASVVCVPFDI) threads the bilayer. The Extracellular segment spans residues 99–108 (ILSTSPHCCW). The helical transmembrane segment at 109–129 (WIYTMLFCKVLKFLHKVFCSV) threads the bilayer. Residues 130-157 (TVLSFPAIALDRYYSVLYPLERKISDAK) are Cytoplasmic-facing. The helical transmembrane segment at 158 to 177 (SRELVMYIWAHAVVASVPVF) threads the bilayer. The Extracellular portion of the chain corresponds to 178–204 (AVTNVADIYATSTCTEVWSNSLGHLVY). Residues 205–225 (VLIYNVTTVIVPVAVVFLFLI) traverse the membrane as a helical segment. Residues 226–264 (LIRRALSASQKKKVIIAALRTPQNTISIPYASQREAELH) are Cytoplasmic-facing. A helical transmembrane segment spans residues 265-285 (ATLLSMVTVFILCSVPYATLV). Over 286-301 (VYQTVLNVPNTSVFLL) the chain is Extracellular. A helical membrane pass occupies residues 302-322 (LTAIWLPKVSLLANPVLFLTV). Residues 323 to 513 (NRSVRKCLVG…KVSIFPKVDS (191 aa)) are Cytoplasmic-facing. Residues 404–432 (VLTSSPEGEESQLAPSVPPPGTVDSVSRV) form a disordered region.

Belongs to the G-protein coupled receptor 1 family. As to expression, expressed in brain, lung, heart, stomach, intestine, cultured aortic smooth muscle cells and cardiac myocytes.

It is found in the cell membrane. In terms of biological role, orphan receptor involved in normal circadian rhythm behavior. Acts through the G-protein subclass G(z)-alpha and has an agonist-independent basal activity to repress cAMP production. This is Probable G-protein coupled receptor 176 (Gpr176) from Rattus norvegicus (Rat).